The primary structure comprises 383 residues: NIPA-like protein 2 (383 aa).

Asn23 and Asn33 each carry an N-linked (GlcNAc...) asparagine glycan. 9 helical membrane passes run 46-66 (IHLF…ISLN), 88-108 (VLWL…FAAY), 115-135 (LIAP…VLFL), 144-164 (LLGM…APNI), 177-197 (FVGW…CILL), 208-228 (IVVL…SVKA), 243-263 (LTYA…VFQV), 278-298 (VVPV…IIFY), and 306-326 (FLTV…VFLV). Residues 352–383 (DKVQPDSNGLSYGTLPDGGDSTRGQCGEKKES) are disordered.

The protein belongs to the NIPA family.

It is found in the membrane. The sequence is that of NIPA-like protein 2 (Nipal2) from Mus musculus (Mouse).